The primary structure comprises 237 residues: N-(5'-phosphoribosyl)anthranilate isomerase (237 aa).

The protein belongs to the TrpF family.

The enzyme catalyses N-(5-phospho-beta-D-ribosyl)anthranilate = 1-(2-carboxyphenylamino)-1-deoxy-D-ribulose 5-phosphate. It participates in amino-acid biosynthesis; L-tryptophan biosynthesis; L-tryptophan from chorismate: step 3/5. This chain is N-(5'-phosphoribosyl)anthranilate isomerase, found in Desulfitobacterium hafniense (strain Y51).